We begin with the raw amino-acid sequence, 111 residues long: Small ribosomal subunit protein bS16 (111 aa).

Residues 92-111 (EKGVKESNEIVEPEGEEVKE) are disordered. The segment covering 100 to 111 (EIVEPEGEEVKE) has biased composition (acidic residues).

It belongs to the bacterial ribosomal protein bS16 family.

This is Small ribosomal subunit protein bS16 from Petrotoga mobilis (strain DSM 10674 / SJ95).